The following is a 505-amino-acid chain: RNA-splicing ligase RtcB homolog (505 aa).

Residues D119, C122, H227, H259, and H353 each coordinate Mn(2+). N226–E230 provides a ligand contact to GMP. GMP-binding positions include H353–N354, G402–M405, S409, H428–G431, and K504. The GMP-histidine intermediate role is filled by H428.

Belongs to the RtcB family. Catalytic component of the tRNA-splicing ligase complex. Requires Mn(2+) as cofactor.

The enzyme catalyses a 3'-end 3'-phospho-ribonucleotide-RNA + a 5'-end dephospho-ribonucleoside-RNA + GTP = a ribonucleotidyl-ribonucleotide-RNA + GMP + diphosphate. The catalysed reaction is a 3'-end 2',3'-cyclophospho-ribonucleotide-RNA + a 5'-end dephospho-ribonucleoside-RNA + GTP + H2O = a ribonucleotidyl-ribonucleotide-RNA + GMP + diphosphate + H(+). Catalytic subunit of the tRNA-splicing ligase complex that acts by directly joining spliced tRNA halves to mature-sized tRNAs by incorporating the precursor-derived splice junction phosphate into the mature tRNA as a canonical 3',5'-phosphodiester. May act as an RNA ligase with broad substrate specificity, and may function toward other RNAs. The protein is RNA-splicing ligase RtcB homolog of Nematostella vectensis (Starlet sea anemone).